The sequence spans 308 residues: Formamidopyrimidine-DNA glycosylase (308 aa).

Pro2 (schiff-base intermediate with DNA) is an active-site residue. Glu3 functions as the Proton donor in the catalytic mechanism. Lys61 functions as the Proton donor; for beta-elimination activity in the catalytic mechanism. His100, Arg120, and Arg181 together coordinate DNA. An FPG-type zinc finger spans residues 267–301 (AVYGQEGRPCPRCGALVRRDAFMNRSSFSCPVCQP). Arg291 acts as the Proton donor; for delta-elimination activity in catalysis.

This sequence belongs to the FPG family. As to quaternary structure, monomer. Zn(2+) is required as a cofactor.

The enzyme catalyses Hydrolysis of DNA containing ring-opened 7-methylguanine residues, releasing 2,6-diamino-4-hydroxy-5-(N-methyl)formamidopyrimidine.. It catalyses the reaction 2'-deoxyribonucleotide-(2'-deoxyribose 5'-phosphate)-2'-deoxyribonucleotide-DNA = a 3'-end 2'-deoxyribonucleotide-(2,3-dehydro-2,3-deoxyribose 5'-phosphate)-DNA + a 5'-end 5'-phospho-2'-deoxyribonucleoside-DNA + H(+). Its function is as follows. Involved in base excision repair of DNA damaged by oxidation or by mutagenic agents. Acts as a DNA glycosylase that recognizes and removes damaged bases. Has a preference for oxidized purines, such as 7,8-dihydro-8-oxoguanine (8-oxoG). Has AP (apurinic/apyrimidinic) lyase activity and introduces nicks in the DNA strand. Cleaves the DNA backbone by beta-delta elimination to generate a single-strand break at the site of the removed base with both 3'- and 5'-phosphates. The sequence is that of Formamidopyrimidine-DNA glycosylase from Kineococcus radiotolerans (strain ATCC BAA-149 / DSM 14245 / SRS30216).